A 204-amino-acid chain; its full sequence is Crossover junction endodeoxyribonuclease RuvC (204 aa).

Residues Asp7, Glu68, and Asp141 contribute to the active site. Asp7, Glu68, and Asp141 together coordinate Mg(2+). The disordered stretch occupies residues 164–204 (QAVAAHRTSGASRTPGAAGTPGPSRTPGAPGTSRTLKGRTA).

The protein belongs to the RuvC family. In terms of assembly, homodimer which binds Holliday junction (HJ) DNA. The HJ becomes 2-fold symmetrical on binding to RuvC with unstacked arms; it has a different conformation from HJ DNA in complex with RuvA. In the full resolvosome a probable DNA-RuvA(4)-RuvB(12)-RuvC(2) complex forms which resolves the HJ. Mg(2+) serves as cofactor.

It localises to the cytoplasm. It catalyses the reaction Endonucleolytic cleavage at a junction such as a reciprocal single-stranded crossover between two homologous DNA duplexes (Holliday junction).. In terms of biological role, the RuvA-RuvB-RuvC complex processes Holliday junction (HJ) DNA during genetic recombination and DNA repair. Endonuclease that resolves HJ intermediates. Cleaves cruciform DNA by making single-stranded nicks across the HJ at symmetrical positions within the homologous arms, yielding a 5'-phosphate and a 3'-hydroxyl group; requires a central core of homology in the junction. The consensus cleavage sequence is 5'-(A/T)TT(C/G)-3'. Cleavage occurs on the 3'-side of the TT dinucleotide at the point of strand exchange. HJ branch migration catalyzed by RuvA-RuvB allows RuvC to scan DNA until it finds its consensus sequence, where it cleaves and resolves the cruciform DNA. The polypeptide is Crossover junction endodeoxyribonuclease RuvC (Streptomyces griseus subsp. griseus (strain JCM 4626 / CBS 651.72 / NBRC 13350 / KCC S-0626 / ISP 5235)).